Reading from the N-terminus, the 277-residue chain is Formamidopyrimidine-DNA glycosylase (277 aa).

Proline 2 serves as the catalytic Schiff-base intermediate with DNA. The active-site Proton donor is the glutamate 3. Lysine 58 acts as the Proton donor; for beta-elimination activity in catalysis. Histidine 95, arginine 113, and arginine 158 together coordinate DNA. The FPG-type zinc-finger motif lies at 243-277; it reads GVYDRANQPCLRCGGVVRQIRQAGRSTYYCTGCQH. The active-site Proton donor; for delta-elimination activity is the arginine 267.

It belongs to the FPG family. Monomer. Zn(2+) serves as cofactor.

It catalyses the reaction Hydrolysis of DNA containing ring-opened 7-methylguanine residues, releasing 2,6-diamino-4-hydroxy-5-(N-methyl)formamidopyrimidine.. It carries out the reaction 2'-deoxyribonucleotide-(2'-deoxyribose 5'-phosphate)-2'-deoxyribonucleotide-DNA = a 3'-end 2'-deoxyribonucleotide-(2,3-dehydro-2,3-deoxyribose 5'-phosphate)-DNA + a 5'-end 5'-phospho-2'-deoxyribonucleoside-DNA + H(+). In terms of biological role, involved in base excision repair of DNA damaged by oxidation or by mutagenic agents. Acts as a DNA glycosylase that recognizes and removes damaged bases. Has a preference for oxidized purines, such as 7,8-dihydro-8-oxoguanine (8-oxoG). Has AP (apurinic/apyrimidinic) lyase activity and introduces nicks in the DNA strand. Cleaves the DNA backbone by beta-delta elimination to generate a single-strand break at the site of the removed base with both 3'- and 5'-phosphates. This is Formamidopyrimidine-DNA glycosylase from Dechloromonas aromatica (strain RCB).